Here is a 104-residue protein sequence, read N- to C-terminus: Large ribosomal subunit protein bL21 (104 aa).

The span at 78–91 (KRRRQNSRRKRGHR) shows a compositional bias: basic residues. The disordered stretch occupies residues 78-104 (KRRRQNSRRKRGHRQDHTVVRITGISA).

Belongs to the bacterial ribosomal protein bL21 family. As to quaternary structure, part of the 50S ribosomal subunit. Contacts protein L20.

This protein binds to 23S rRNA in the presence of protein L20. The protein is Large ribosomal subunit protein bL21 of Methylobacterium radiotolerans (strain ATCC 27329 / DSM 1819 / JCM 2831 / NBRC 15690 / NCIMB 10815 / 0-1).